The sequence spans 490 residues: Protein nucleotidyltransferase YdiU (490 aa).

ATP contacts are provided by glycine 94, glycine 96, arginine 97, lysine 117, aspartate 129, glycine 130, arginine 180, and arginine 187. The Proton acceptor role is filled by aspartate 256. The Mg(2+) site is built by asparagine 257 and aspartate 266. An ATP-binding site is contributed by aspartate 266.

This sequence belongs to the SELO family. Mg(2+) serves as cofactor. The cofactor is Mn(2+).

The enzyme catalyses L-seryl-[protein] + ATP = 3-O-(5'-adenylyl)-L-seryl-[protein] + diphosphate. The catalysed reaction is L-threonyl-[protein] + ATP = 3-O-(5'-adenylyl)-L-threonyl-[protein] + diphosphate. It catalyses the reaction L-tyrosyl-[protein] + ATP = O-(5'-adenylyl)-L-tyrosyl-[protein] + diphosphate. It carries out the reaction L-histidyl-[protein] + UTP = N(tele)-(5'-uridylyl)-L-histidyl-[protein] + diphosphate. The enzyme catalyses L-seryl-[protein] + UTP = O-(5'-uridylyl)-L-seryl-[protein] + diphosphate. The catalysed reaction is L-tyrosyl-[protein] + UTP = O-(5'-uridylyl)-L-tyrosyl-[protein] + diphosphate. Nucleotidyltransferase involved in the post-translational modification of proteins. It can catalyze the addition of adenosine monophosphate (AMP) or uridine monophosphate (UMP) to a protein, resulting in modifications known as AMPylation and UMPylation. The sequence is that of Protein nucleotidyltransferase YdiU from Clostridium beijerinckii (strain ATCC 51743 / NCIMB 8052) (Clostridium acetobutylicum).